Here is a 314-residue protein sequence, read N- to C-terminus: DNA-directed RNA polymerase subunit alpha (314 aa).

The alpha N-terminal domain (alpha-NTD) stretch occupies residues 1-227 (MLEIEKPKIE…DYLKLFVALT (227 aa)). An alpha C-terminal domain (alpha-CTD) region spans residues 244-314 (QDKILEMTIE…LGLSLRKSED (71 aa)).

It belongs to the RNA polymerase alpha chain family. As to quaternary structure, homodimer. The RNAP catalytic core consists of 2 alpha, 1 beta, 1 beta' and 1 omega subunit. When a sigma factor is associated with the core the holoenzyme is formed, which can initiate transcription.

The catalysed reaction is RNA(n) + a ribonucleoside 5'-triphosphate = RNA(n+1) + diphosphate. Its function is as follows. DNA-dependent RNA polymerase catalyzes the transcription of DNA into RNA using the four ribonucleoside triphosphates as substrates. The protein is DNA-directed RNA polymerase subunit alpha of Heliobacterium modesticaldum (strain ATCC 51547 / Ice1).